The following is a 432-amino-acid chain: Amino-acid acetyltransferase (432 aa).

The 140-residue stretch at 286 to 425 (EQLREAGIED…ASLYNFQRNS (140 aa)) folds into the N-acetyltransferase domain.

Belongs to the acetyltransferase family. ArgA subfamily.

The protein localises to the cytoplasm. It catalyses the reaction L-glutamate + acetyl-CoA = N-acetyl-L-glutamate + CoA + H(+). It functions in the pathway amino-acid biosynthesis; L-arginine biosynthesis; N(2)-acetyl-L-ornithine from L-glutamate: step 1/4. The protein is Amino-acid acetyltransferase of Pseudomonas paraeruginosa (strain DSM 24068 / PA7) (Pseudomonas aeruginosa (strain PA7)).